Reading from the N-terminus, the 194-residue chain is Imidazoleglycerol-phosphate dehydratase (194 aa).

This sequence belongs to the imidazoleglycerol-phosphate dehydratase family.

The protein resides in the cytoplasm. It carries out the reaction D-erythro-1-(imidazol-4-yl)glycerol 3-phosphate = 3-(imidazol-4-yl)-2-oxopropyl phosphate + H2O. It functions in the pathway amino-acid biosynthesis; L-histidine biosynthesis; L-histidine from 5-phospho-alpha-D-ribose 1-diphosphate: step 6/9. This Chloroherpeton thalassium (strain ATCC 35110 / GB-78) protein is Imidazoleglycerol-phosphate dehydratase.